A 1850-amino-acid chain; its full sequence is Serine/threonine-protein kinase WNK (1850 aa).

3 disordered regions span residues 1–108, 221–253, and 272–309; these read MPDS…NALE, QHSI…NNDK, and MVND…EKAA. Composition is skewed to low complexity over residues 16-26 and 234-251; these read SSVSSTTASTT and PPNT…AANN. Over residues 284-309 the composition is skewed to basic and acidic residues; it reads DMDKMVSEEERARKEQEKREEEEKAA. A Protein kinase domain is found at 334-596; sequence LKFDEELGRG…VKQLLVDDFF (263 aa). Residues serine 344, 416–419, and lysine 466 each bind ATP; that span reads TELM. The active-site Proton acceptor is the aspartate 483. Residues 693–749 are a coiled coil; the sequence is DHRLLEIKRAKEEEERIREEAEIKEELRLRAEAKEKEKERLEKERLEKKAAAAAAAN. Residues 727–742 are compositionally biased toward basic and acidic residues; that stretch reads EKEKERLEKERLEKKA. Disordered stretches follow at residues 727-790, 890-943, 1040-1130, 1188-1249, 1588-1636, 1721-1740, and 1769-1850; these read EKEK…AQQP, TPAS…KRKS, EPPT…AAKP, SPVS…TPAI, GTHI…PSHS, ASLS…DNEG, and IIPS…IENV. The span at 751–760 shows a compositional bias: pro residues; it reads NPTPIPPTPA. The segment covering 776–790 has biased composition (polar residues); sequence STQTSAEIQQSAQQP. Over residues 890–934 the composition is skewed to low complexity; the sequence is TPASIASPSPAPSATDVASTTAPVTPAPTPTTTTDGGAAAASTTT. Residues 1062–1071 show a composition bias toward basic and acidic residues; it reads PKIEIEKTPP. A compositionally biased stretch (polar residues) spans 1077 to 1101; it reads QEPNNVQVTNVRKVSQESNAESVQS. The segment covering 1188 to 1207 has biased composition (low complexity); that stretch reads SPVSHSLSSNSSPSATTHSN. Residues 1208 to 1217 are compositionally biased toward polar residues; that stretch reads MSSIQSTTSV. Low complexity predominate over residues 1771–1805; sequence PSSRQSVRSATSSSPSTPPSSSSAPPKSLSSPTKS. Positions 1806–1820 are enriched in polar residues; it reads YVSHCSLSIGYGSTA. The span at 1821 to 1832 shows a compositional bias: low complexity; it reads SSEQQQREPSPS.

It belongs to the protein kinase superfamily. Ser/Thr protein kinase family. WNK subfamily. In terms of assembly, interacts with gck-3 (via C-terminus). Requires Mg(2+) as cofactor. In terms of tissue distribution, expressed in pharynx, nervous system, hypodermis, spermatheca, excretory cell and canal and body wall muscles.

The protein localises to the cytoplasm. The enzyme catalyses L-seryl-[protein] + ATP = O-phospho-L-seryl-[protein] + ADP + H(+). It catalyses the reaction L-threonyl-[protein] + ATP = O-phospho-L-threonyl-[protein] + ADP + H(+). With respect to regulation, activated in response to hyperosmotic stress: cell shrinkage promotes formation of a membraneless compartment that concentrates wnk-1 with its downstrem substrates. Functionally, serine/threonine-protein kinase component of the WNK3-SPAK/OSR1 kinase cascade, which plays an important role in the regulation of electrolyte homeostasis and regulatory volume increase in response to hyperosmotic stress. Wnk-1 mediates regulatory volume increase in response to hyperosmotic stress by acting as a molecular crowding sensor, which senses cell shrinkage and mediates formation of a membraneless compartment by undergoing liquid-liquid phase separation. The membraneless compartment concentrates wnk-1 with its substrates. Phosphorylates gck-3. Plays a role in osmotic stress responses during which it increases gpdh-1 translation, likely by phosphorylating gck-3. Essential for larval development and the tubular formation of the excretory canals. The chain is Serine/threonine-protein kinase WNK from Caenorhabditis elegans.